A 147-amino-acid polypeptide reads, in one-letter code: Cytochrome c-type biogenesis protein CcmE 1 (147 aa).

Residues 1–9 (MKSLKKQRR) are Cytoplasmic-facing. A helical; Signal-anchor for type II membrane protein transmembrane segment spans residues 10-30 (IQVIILATVALVLATGLIGYA). Over 31 to 147 (MRDGINFFRA…EQGVYQAPES (117 aa)) the chain is Periplasmic. Residues H123 and Y127 each coordinate heme.

It belongs to the CcmE/CycJ family.

The protein resides in the cell inner membrane. In terms of biological role, heme chaperone required for the biogenesis of c-type cytochromes. Transiently binds heme delivered by CcmC and transfers the heme to apo-cytochromes in a process facilitated by CcmF and CcmH. This chain is Cytochrome c-type biogenesis protein CcmE 1, found in Ruegeria pomeroyi (strain ATCC 700808 / DSM 15171 / DSS-3) (Silicibacter pomeroyi).